The chain runs to 306 residues: Probable C-terminal domain small phosphatase (306 aa).

Residues 1 to 36 show a composition bias toward polar residues; sequence MNSSPITQVSNPNDSLNHSSTNLIPSSHNSLNNYPQ. 2 disordered regions span residues 1–45 and 61–116; these read MNSS…NRKK and NDQN…NKDS. Over residues 61–111 the composition is skewed to low complexity; sequence NDQNNGNNINTDNGASNNDKLQQQKQYNQQQQQQYNQHQQQQQQQQQQQQY. The FCP1 homology domain maps to 132–290; the sequence is RHVGLKTLVL…LDLLPLLDDL (159 aa). Residue D142 is the 4-aspartylphosphate intermediate of the active site. Residues D142, D144, and N253 each contribute to the Mg(2+) site. The Proton donor role is filled by D144.

As to quaternary structure, monomer. The cofactor is Mg(2+).

It is found in the nucleus. It catalyses the reaction O-phospho-L-seryl-[protein] + H2O = L-seryl-[protein] + phosphate. The catalysed reaction is O-phospho-L-threonyl-[protein] + H2O = L-threonyl-[protein] + phosphate. Its function is as follows. May function as a phosphatase involved in the regulation of cell growth and differentiation. The chain is Probable C-terminal domain small phosphatase (fcpA) from Dictyostelium discoideum (Social amoeba).